Reading from the N-terminus, the 155-residue chain is Immunoglobulin domain-containing protein oig-4 (155 aa).

The signal sequence occupies residues 1 to 22 (MSFRLWGRCIFFFCFLLEAIDS). Residues asparagine 55 and asparagine 114 are each glycosylated (N-linked (GlcNAc...) asparagine). The Ig-like C2-type domain occupies 73–154 (GYKLLIICKA…MAKNFKAEYT (82 aa)). Cysteine 80 and cysteine 136 are disulfide-bonded.

As to quaternary structure, interacts with the non-alpha subunit of nicotinic acetylcholine receptor unc-29 and lev-10 to stabilize the complex formed between unc-29 and lev-10. Expressed in body wall muscle cells, the pharyngeal muscle cell pm6 and in four head neurons.

Its subcellular location is the synapse. The protein localises to the secreted. Functionally, required for the localization of acetylcholine receptors at neuromuscular junctions and for subsequently controlling the response evoked by receptor stimulation. The sequence is that of Immunoglobulin domain-containing protein oig-4 from Caenorhabditis elegans.